Consider the following 426-residue polypeptide: Eukaryotic translation initiation factor 3 subunit M (426 aa).

One can recognise a PCI domain in the interval 179 to 350 (DDEDSYRYLI…KVFLVHRTTY (172 aa)). Over residues 385–401 (DVEGQREREQQELERKL) the composition is skewed to basic and acidic residues. The interval 385–426 (DVEGQREREQQELERKLAGAGMGGGPGGDRRRQQKPRTDEDD) is disordered.

This sequence belongs to the eIF-3 subunit M family. In terms of assembly, component of the eukaryotic translation initiation factor 3 (eIF-3) complex.

It localises to the cytoplasm. In terms of biological role, component of the eukaryotic translation initiation factor 3 (eIF-3) complex, which is involved in protein synthesis of a specialized repertoire of mRNAs and, together with other initiation factors, stimulates binding of mRNA and methionyl-tRNAi to the 40S ribosome. The eIF-3 complex specifically targets and initiates translation of a subset of mRNAs involved in cell proliferation. In Chaetomium globosum (strain ATCC 6205 / CBS 148.51 / DSM 1962 / NBRC 6347 / NRRL 1970) (Soil fungus), this protein is Eukaryotic translation initiation factor 3 subunit M.